A 902-amino-acid chain; its full sequence is Histone-lysine N-methyltransferase CLF (902 aa).

The span at 1–14 (MASEASPSSSATRS) shows a compositional bias: low complexity. Disordered stretches follow at residues 1–33 (MASE…KEVS), 73–107 (SMER…SNNN), and 335–522 (GKTG…FMGE). Composition is skewed to basic and acidic residues over residues 15 to 33 (EPPK…KEVS) and 78 to 95 (GSCK…RDSP). Over residues 337–357 (TGTSSDGAGTKTTPTKFSSKL) the composition is skewed to polar residues. Over residues 394 to 403 (DKVSSSPKVK) the composition is skewed to low complexity. Basic residues predominate over residues 404-416 (GSGRRVGRKRNKN). Low complexity predominate over residues 438–449 (SDSIASGSCSPS). Residues 459-473 (ATSSSQKHVKSGNSG) show a composition bias toward polar residues. The 51-residue stretch at 531 to 581 (TNKLWRPLEKSLFDKGVEIFGMNSCLIARNLLSGFKSCWEVFQYMTCSENK) folds into the SANT domain. The CXC domain occupies 638-737 (RKRITEKKDQ…SLGVPSQRGD (100 aa)). Residues 752–867 (QRVLLGISDV…AGEELFYDYR (116 aa)) form the SET domain. Residue Tyr-866 coordinates S-adenosyl-L-methionine. Residues 875–890 (AWAKKPEAPGSKKDEN) are compositionally biased toward basic and acidic residues. The tract at residues 875–902 (AWAKKPEAPGSKKDENVTPSVGRPKKLA) is disordered.

Belongs to the class V-like SAM-binding methyltransferase superfamily. Histone-lysine methyltransferase family. EZ subfamily. Probable component of a PcG complex. In plants, PcG complexes are probably composed of a member of the EZ family (CLF or MEA), FIE, and a member of the VEFS family (FIS2, VRN2 or EMF2). Interacts with FIE. Interacts with RING1A. Binds to ALP1. Interacts with BLI. Binds to ATX1 in the nucleus. Interacts with EOL1. Interacts (via SANT domain) with HXK1 in the nucleus. As to expression, strongly expressed throughout the apical meristem, leaf primordia, and leaves of 7-8 day-old seedling. Weakly expressed in the vasculature of hypocotyl. Strongly expressed throughout the young stages 1 and 2 floral meristems that arose on the flanks of the apex. In stage 3 and 4 flowers, it is expressed in the emerging sepal primordia and in the dome of the floral meristem. During stages 6 and 7, it is strongly expressed in developing petal and stamen, and weakly expressed in the sepals. Late in floral development, at stage 12, it is weakly expressed in all floral whorls, and expressed at intermediate level in petals and ovules.

It localises to the nucleus. The enzyme catalyses L-lysyl-[histone] + S-adenosyl-L-methionine = N(6)-methyl-L-lysyl-[histone] + S-adenosyl-L-homocysteine + H(+). In terms of biological role, polycomb group (PcG) protein. Catalytic subunit of some PcG multiprotein complex, which methylates 'Lys-27' of histone H3, leading to transcriptional repression of the affected target genes, mainly abscisic acid (ABA) responsive elements. Required to regulate floral development by repressing the AGAMOUS homeotic gene in leaves, inflorescence stems and flowers. Together with ATX1, modulates AG nucleosome methylation statement. Regulates the antero-posterior organization of the endosperm, as well as the division and elongation rates of leaf cells. PcG proteins act by forming multiprotein complexes, which are required to maintain the transcriptionally repressive state of homeotic genes throughout development. PcG proteins are not required to initiate repression, but to maintain it during later stages of development. Forms a nuclear complex with EZA1/SWN and HXK1 to target common glucose-responsive genes and regulate glucose signaling by glucose-mediated gene repression. Affects the recruitment of HXK1 to the target chromatin. The chain is Histone-lysine N-methyltransferase CLF from Arabidopsis thaliana (Mouse-ear cress).